The chain runs to 365 residues: Mitogen-activated protein kinase p38b (365 aa).

The region spanning 24-311 (YQNLQPVGQG…AEQALAHPYM (288 aa)) is the Protein kinase domain. ATP is bound by residues 30-38 (VGQGAYGQV) and Lys-53. Asp-153 serves as the catalytic Proton acceptor. At Thr-183 the chain carries Phosphothreonine. The TXY motif lies at 183 to 185 (TGY). Phosphotyrosine is present on Tyr-185.

This sequence belongs to the protein kinase superfamily. CMGC Ser/Thr protein kinase family. MAP kinase subfamily. Mg(2+) is required as a cofactor. In terms of processing, dually phosphorylated on Thr-183 and Tyr-185, which activates the enzyme. In terms of tissue distribution, at mid-embryogenesis, highest expression is seen in developing anterior and posterior midguts. Almost ubiquitous expression throughout all development.

The protein localises to the nucleus. The catalysed reaction is L-seryl-[protein] + ATP = O-phospho-L-seryl-[protein] + ADP + H(+). The enzyme catalyses L-threonyl-[protein] + ATP = O-phospho-L-threonyl-[protein] + ADP + H(+). Activated by threonine and tyrosine phosphorylation by Mkk3. Kinase involved in dpp signal transduction pathway in the process of wing morphogenesis when the levels of dpp are enhanced or inhibited. May down-regulate insect immunity gene expression after prolonged infection. The chain is Mitogen-activated protein kinase p38b from Drosophila melanogaster (Fruit fly).